The sequence spans 214 residues: MSFAREAGRAIRSTLVLWVITALIYPFSMIAIGQILFPWQANGSLITNNQGQVVGSALIGQPFISDRYFNSRPSTTNYSTADPKNDPNKVLQTGISGASNLAPSNPALIDRIKGKPDPDPAKAIQGEIPRLEKGAIKPTAALVYTSGSGLDPHITPEAARAQIERVARVRGLPTNQVEILVTKNTDERFLGIFGEPGVNLLKLNLALDAIANTR.

A helical transmembrane segment spans residues 17–37; that stretch reads LWVITALIYPFSMIAIGQILF.

It belongs to the KdpC family. The system is composed of three essential subunits: KdpA, KdpB and KdpC.

Its subcellular location is the cell inner membrane. Part of the high-affinity ATP-driven potassium transport (or Kdp) system, which catalyzes the hydrolysis of ATP coupled with the electrogenic transport of potassium into the cytoplasm. This subunit acts as a catalytic chaperone that increases the ATP-binding affinity of the ATP-hydrolyzing subunit KdpB by the formation of a transient KdpB/KdpC/ATP ternary complex. This Microcystis aeruginosa (strain NIES-843 / IAM M-2473) protein is Potassium-transporting ATPase KdpC subunit.